The primary structure comprises 553 residues: Glutamine--tRNA ligase (553 aa).

Positions 34 to 44 (PEPNGYLHIGH) match the 'HIGH' region motif. ATP contacts are provided by residues 35–37 (EPN) and 41–47 (HIGHAKS). The L-glutamine site is built by Asp67 and Tyr212. Residues Thr231, 261–262 (RL), and 269–271 (MSK) contribute to the ATP site. Positions 268-272 (IMSKR) match the 'KMSKS' region motif.

Belongs to the class-I aminoacyl-tRNA synthetase family. In terms of assembly, monomer.

The protein resides in the cytoplasm. It carries out the reaction tRNA(Gln) + L-glutamine + ATP = L-glutaminyl-tRNA(Gln) + AMP + diphosphate. In Tolumonas auensis (strain DSM 9187 / NBRC 110442 / TA 4), this protein is Glutamine--tRNA ligase.